Here is a 639-residue protein sequence, read N- to C-terminus: Ubiquitin-like modifier-activating enzyme ATG7 (639 aa).

Residues 322-327 (GAGTLG) carry the GXGXXG motif motif. Catalysis depends on Cys-502, which acts as the Glycyl thioester intermediate.

The protein belongs to the ATG7 family. Homodimer.

It is found in the cytoplasm. The protein resides in the preautophagosomal structure. E1-like activating enzyme involved in the 2 ubiquitin-like systems required for cytoplasm to vacuole transport (Cvt) and autophagy. Activates ATG12 for its conjugation with ATG5 and ATG8 for its conjugation with phosphatidylethanolamine. Both systems are needed for the ATG8 association to Cvt vesicles and autophagosomes membranes. Autophagy is essential for maintenance of amino acid levels and protein synthesis under nitrogen starvation. Required for selective autophagic degradation of the nucleus (nucleophagy) as well as for mitophagy which contributes to regulate mitochondrial quantity and quality by eliminating the mitochondria to a basal level to fulfill cellular energy requirements and preventing excess ROS production. Plays a role in the regulation of filamentous growth and chronological longevity. In Candida albicans (strain SC5314 / ATCC MYA-2876) (Yeast), this protein is Ubiquitin-like modifier-activating enzyme ATG7 (APG7).